A 346-amino-acid polypeptide reads, in one-letter code: Large ribosomal subunit protein uL10 (346 aa).

The tract at residues 307–346 is disordered; that stretch reads AAAVAKEPEKKEEVKEEEEEEEEEDHSEEDGMAGLGSLFG. Residues 321-337 are compositionally biased toward acidic residues; the sequence is KEEEEEEEEEDHSEEDG.

It belongs to the universal ribosomal protein uL10 family. As to quaternary structure, part of the 50S ribosomal subunit. Forms part of the ribosomal stalk which helps the ribosome interact with GTP-bound translation factors. Forms both a pentameric L10(L12)2(L12)2 and heptameric L10(L12)2(L12)2(L12)2 complex, where L10 forms an elongated spine to which the L12 dimers bind in a sequential fashion. The proportion of heptameric complexes increases during cell growth.

In terms of biological role, forms part of the ribosomal stalk, playing a central role in the interaction of the ribosome with GTP-bound translation factors. This chain is Large ribosomal subunit protein uL10, found in Methanosarcina barkeri (strain Fusaro / DSM 804).